A 124-amino-acid polypeptide reads, in one-letter code: Small ribosomal subunit protein uS13 (124 aa).

A disordered region spans residues glycine 95–arginine 124.

The protein belongs to the universal ribosomal protein uS13 family. Part of the 30S ribosomal subunit. Forms a loose heterodimer with protein S19. Forms two bridges to the 50S subunit in the 70S ribosome.

Functionally, located at the top of the head of the 30S subunit, it contacts several helices of the 16S rRNA. In the 70S ribosome it contacts the 23S rRNA (bridge B1a) and protein L5 of the 50S subunit (bridge B1b), connecting the 2 subunits; these bridges are implicated in subunit movement. Contacts the tRNAs in the A and P-sites. This is Small ribosomal subunit protein uS13 from Mycobacteroides abscessus (strain ATCC 19977 / DSM 44196 / CCUG 20993 / CIP 104536 / JCM 13569 / NCTC 13031 / TMC 1543 / L948) (Mycobacterium abscessus).